Reading from the N-terminus, the 191-residue chain is MIRYLRGLVLKKEAGGFVLLAGGVGFFLQAPTPFLQALEEGKEVGVHTHLLLKEEGLSLYGFPDEENLALFELLLSVSGVGPKVALALLSALPPRLLARALLEGDARLLTSASGVGRRLAERIALELKGKVPPHLLAGEKVESEAAEEAVMALAALGFKEAQARAVVLDLLAQNPKARAQDLIKEALKRLR.

Residues 1-63 are domain I; sequence MIRYLRGLVL…EEGLSLYGFP (63 aa). The tract at residues 64–136 is domain II; the sequence is DEENLALFEL…LKGKVPPHLL (73 aa). The flexible linker stretch occupies residues 136–140; sequence LAGEK. The domain III stretch occupies residues 141–191; it reads VESEAAEEAVMALAALGFKEAQARAVVLDLLAQNPKARAQDLIKEALKRLR.

The protein belongs to the RuvA family. As to quaternary structure, homotetramer. Forms an RuvA(8)-RuvB(12)-Holliday junction (HJ) complex. HJ DNA is sandwiched between 2 RuvA tetramers; dsDNA enters through RuvA and exits via RuvB. An RuvB hexamer assembles on each DNA strand where it exits the tetramer. Each RuvB hexamer is contacted by two RuvA subunits (via domain III) on 2 adjacent RuvB subunits; this complex drives branch migration. In the full resolvosome a probable DNA-RuvA(4)-RuvB(12)-RuvC(2) complex forms which resolves the HJ.

The protein localises to the cytoplasm. In terms of biological role, the RuvA-RuvB-RuvC complex processes Holliday junction (HJ) DNA during genetic recombination and DNA repair, while the RuvA-RuvB complex plays an important role in the rescue of blocked DNA replication forks via replication fork reversal (RFR). RuvA specifically binds to HJ cruciform DNA, conferring on it an open structure. The RuvB hexamer acts as an ATP-dependent pump, pulling dsDNA into and through the RuvAB complex. HJ branch migration allows RuvC to scan DNA until it finds its consensus sequence, where it cleaves and resolves the cruciform DNA. The chain is Holliday junction branch migration complex subunit RuvA from Thermus thermophilus (strain ATCC BAA-163 / DSM 7039 / HB27).